The following is a 29-amino-acid chain: Small ribosomal subunit protein uS7 (29 aa).

The tract at residues 1 to 29 (ELIGAANRDTKSFSINRKDAKERVAKAAR) is disordered. Positions 8-29 (RDTKSFSINRKDAKERVAKAAR) are enriched in basic and acidic residues.

Belongs to the universal ribosomal protein uS7 family. As to quaternary structure, part of the 30S ribosomal subunit.

In terms of biological role, one of the primary rRNA binding proteins, it binds directly to 16S rRNA where it nucleates assembly of the head domain of the 30S subunit. Is located at the subunit interface close to the decoding center. In Methanosarcina thermophila, this protein is Small ribosomal subunit protein uS7 (rps7).